The chain runs to 367 residues: Anhydro-N-acetylmuramic acid kinase (367 aa).

Residue 13–20 (GTSMDGAD) coordinates ATP.

Belongs to the anhydro-N-acetylmuramic acid kinase family.

It catalyses the reaction 1,6-anhydro-N-acetyl-beta-muramate + ATP + H2O = N-acetyl-D-muramate 6-phosphate + ADP + H(+). It functions in the pathway amino-sugar metabolism; 1,6-anhydro-N-acetylmuramate degradation. Its pathway is cell wall biogenesis; peptidoglycan recycling. Catalyzes the specific phosphorylation of 1,6-anhydro-N-acetylmuramic acid (anhMurNAc) with the simultaneous cleavage of the 1,6-anhydro ring, generating MurNAc-6-P. Is required for the utilization of anhMurNAc either imported from the medium or derived from its own cell wall murein, and thus plays a role in cell wall recycling. The sequence is that of Anhydro-N-acetylmuramic acid kinase from Neisseria gonorrhoeae (strain ATCC 700825 / FA 1090).